We begin with the raw amino-acid sequence, 306 residues long: Agmatinase (306 aa).

Positions 126, 149, 151, 153, 230, and 232 each coordinate Mn(2+).

Belongs to the arginase family. Agmatinase subfamily. Requires Mn(2+) as cofactor.

It carries out the reaction agmatine + H2O = urea + putrescine. It functions in the pathway amine and polyamine biosynthesis; putrescine biosynthesis via agmatine pathway; putrescine from agmatine: step 1/1. In terms of biological role, catalyzes the formation of putrescine from agmatine. This Salmonella dublin (strain CT_02021853) protein is Agmatinase.